A 279-amino-acid polypeptide reads, in one-letter code: Reaction center protein L chain (279 aa).

The next 3 membrane-spanning stretches (helical) occupy residues 33-56 (GFFG…GASQ), 85-113 (GLWQ…RKLG), and 116-141 (YHVP…ILMG). Positions 154 and 174 each coordinate (7R,8Z)-bacteriochlorophyll b. Residues 171–200 (NPAHMLAITFFFTTTLAMSMHGGLILSAAN) form a helical membrane-spanning segment. His191 contributes to the Fe cation binding site. Phe217 lines the a ubiquinone pocket. A helical transmembrane segment spans residues 226–252 (GSLGIHRLGLFLALSAAFWSAVCIVIS). His231 is a Fe cation binding site.

The protein belongs to the reaction center PufL/M/PsbA/D family. In terms of assembly, reaction center is composed of four bacteriochlorophylls, two bacteriopheophytins, two ubiquinones, one iron, and three highly hydrophobic polypeptide chains (designated L, M, and H).

The protein resides in the cell inner membrane. Its function is as follows. The reaction center is a membrane-bound complex that mediates the initial photochemical event in the electron transfer process of photosynthesis. The polypeptide is Reaction center protein L chain (pufL) (Rubrivivax gelatinosus (strain NBRC 100245 / IL144)).